A 164-amino-acid chain; its full sequence is Nitric oxide synthase, inducible (164 aa).

F3 provides a ligand contact to (6R)-L-erythro-5,6,7,8-tetrahydrobiopterin. Y18 contacts heme b. Residues 42-62 are calmodulin-binding; the sequence is FKGLIRAVLFSQTLIKSALAK. The 99-residue stretch at 66–164 folds into the Flavodoxin-like domain; the sequence is CTVLYATETG…SRMYPHFCAF (99 aa). FMN contacts are provided by T72, E73, T74, K76, S77, S118, T119, S155, and C162.

The protein belongs to the NOS family. As to quaternary structure, homodimer. The cofactor is heme b. FAD serves as cofactor. It depends on FMN as a cofactor. Requires (6R)-L-erythro-5,6,7,8-tetrahydrobiopterin as cofactor.

It is found in the cytoplasm. The protein resides in the cytosol. It catalyses the reaction 2 L-arginine + 3 NADPH + 4 O2 + H(+) = 2 L-citrulline + 2 nitric oxide + 3 NADP(+) + 4 H2O. Not stimulated by calcium/calmodulin. Produces nitric oxide (NO) which is a messenger molecule with diverse functions throughout the body. In macrophages, NO mediates tumoricidal and bactericidal actions. Also has nitrosylase activity and mediates cysteine S-nitrosylation of cytoplasmic target proteins such COX2. This Carassius auratus (Goldfish) protein is Nitric oxide synthase, inducible (nos2).